Consider the following 418-residue polypeptide: Probable serine hydroxymethyltransferase (418 aa).

Residues Leu118 and 122–124 (GHL) each bind (6S)-5,6,7,8-tetrahydrofolate. N6-(pyridoxal phosphate)lysine is present on Lys226. (6S)-5,6,7,8-tetrahydrofolate is bound at residue 351–353 (SPF).

It belongs to the SHMT family. As to quaternary structure, homodimer. The cofactor is pyridoxal 5'-phosphate.

Its subcellular location is the cytoplasm. It carries out the reaction (6R)-5,10-methylene-5,6,7,8-tetrahydrofolate + glycine + H2O = (6S)-5,6,7,8-tetrahydrofolate + L-serine. It functions in the pathway one-carbon metabolism; tetrahydrofolate interconversion. Its function is as follows. Catalyzes the reversible interconversion of serine and glycine with tetrahydrofolate (THF) serving as the one-carbon carrier. This reaction serves as the major source of one-carbon groups required for the biosynthesis of purines, thymidylate, methionine, and other important biomolecules. This Mesomycoplasma hyopneumoniae (strain J / ATCC 25934 / NCTC 10110) (Mycoplasma hyopneumoniae) protein is Probable serine hydroxymethyltransferase.